The following is a 234-amino-acid chain: MSETSFNLISEKCDILSILRDHPENRIYQRKIQELSKRFTSIRKTKGDGNCFYRALGYSYLESLLGKSREILKFKERVLQTPNDLLAAGFEEHKFRNFFNAFYSVVELVEKDSSVSSLLKVFNDQSSSDRIVQFLRLLTSAFIRNRADFFRHFIDEEMDIKDFCTHEVEPMAMECDHVQITALSQALNIALQVEYVDEMDTALNHHVFPEAAIPSVYLLYKTSHYNILYAAEKH.

One can recognise an OTU domain in the interval 40 to 231 (TSIRKTKGDG…TSHYNILYAA (192 aa)). The active site involves D48. Residue C51 is the Nucleophile of the active site. Residues H205 and H224 contribute to the active site.

This sequence belongs to the peptidase C65 family.

It carries out the reaction Thiol-dependent hydrolysis of ester, thioester, amide, peptide and isopeptide bonds formed by the C-terminal Gly of ubiquitin (a 76-residue protein attached to proteins as an intracellular targeting signal).. Its function is as follows. Hydrolase that can remove conjugated ubiquitin from proteins in vitro and may therefore play an important regulatory role at the level of protein turnover by preventing degradation. Mediates deubiquitination of 'Lys-11'-,'Lys-48'- and 'Lys-63'-linked polyubiquitin chains, with a preference for 'Lys-63'-linked polyubiquitin chains. The chain is Ubiquitin thioesterase OTUB2 (Otub2) from Mus musculus (Mouse).